A 104-amino-acid polypeptide reads, in one-letter code: Secretoglobin family 3A member 1 (104 aa).

The N-terminal stretch at 1 to 21 (MKLTTTFLVLCVALLSDSGVA) is a signal peptide.

Belongs to the secretoglobin family. UGRP subfamily. As to quaternary structure, homodimer; disulfide-linked. In terms of tissue distribution, highly expressed in lung, where it localizes to epithelial cells lining the trachea and bronchi. Expression in lung is mainly restricted to bronchi, submucosal glands of the trachea, and tracheal epithelium, with little expression in terminal bronchioles. Expressed in uterus where it localizes to epithelial cells of the uterine glands. Also detected in heart, stomach and small intestine.

It is found in the secreted. Secreted cytokine-like protein. Inhibits cell growth in vitro. This is Secretoglobin family 3A member 1 (Scgb3a1) from Mus musculus (Mouse).